The primary structure comprises 906 residues: Catenin alpha-1 (906 aa).

The residue at position 2 (Thr-2) is an N-acetylthreonine. The tract at residues 2–228 is involved in homodimerization; it reads TAVHTGNINF…PILYTASQAC (227 aa). Lys-57 participates in a covalent cross-link: Glycyl lysine isopeptide (Lys-Gly) (interchain with G-Cter in SUMO2). The tract at residues 97-148 is interaction with JUP and CTNNB1; that stretch reads VRKQCDLMKSAAGEFADDPCSSVKRGNMVRAARALLSAVTRLLILADMADVY. 4 positions are modified to phosphoserine: Ser-264, Ser-268, Ser-295, and Ser-297. The interval 325–394 is interaction with alpha-actinin; it reads TRDDRRERIV…AVMDHVSDSF (70 aa). Thr-634 is subject to Phosphothreonine. Ser-641 is subject to Phosphoserine. Thr-645 bears the Phosphothreonine mark. Residues Ser-652 and Ser-655 each carry the phosphoserine modification. Residue Thr-658 is modified to Phosphothreonine. Lys-797 participates in a covalent cross-link: Glycyl lysine isopeptide (Lys-Gly) (interchain with G-Cter in SUMO2). Ser-851 bears the Phosphoserine mark. Positions 864-880 are enriched in basic and acidic residues; that stretch reads PEKKPLVKREKQDETQT. A disordered region spans residues 864-894; it reads PEKKPLVKREKQDETQTKIKRASQKKHVNPV. Basic residues predominate over residues 881-891; the sequence is KIKRASQKKHV.

This sequence belongs to the vinculin/alpha-catenin family. In terms of assembly, monomer and homodimer; the monomer preferentially binds to CTNNB1 and the homodimer to actin. Component of an cadherin:catenin adhesion complex composed of at least of CDH26, beta-catenin/CTNNB1, alpha-catenin/CTNNA1 and p120 catenin/CTNND1. Possible component of an E-cadherin/ catenin adhesion complex together with E-cadherin/CDH1 and beta-catenin/CTNNB1 or gamma-catenin/JUP; the complex is located to adherens junctions. The stable association of CTNNA1 is controversial as CTNNA1 was shown not to bind to F-actin when assembled in the complex. Alternatively, the CTNNA1-containing complex may be linked to F-actin by other proteins such as LIMA1. Binds AFDN and F-actin. Interacts with ARHGAP21. Interacts with AJUBA. Interacts with LIMA1. Interacts with vinculin/VCL. Interacts with TJP2/ZO2 (via N-terminus). Interacts with TJP1/ZO1 (via N-terminus). In terms of processing, sumoylated. Post-translationally, phosphorylation seems to contribute to the strength of cell-cell adhesion rather than to the basic capacity for cell-cell adhesion.

The protein localises to the cytoplasm. The protein resides in the cytoskeleton. Its subcellular location is the cell junction. It is found in the adherens junction. It localises to the cell membrane. The protein localises to the nucleus. Associates with the cytoplasmic domain of a variety of cadherins. The association of catenins to cadherins produces a complex which is linked to the actin filament network, and which seems to be of primary importance for cadherins cell-adhesion properties. Can associate with both E- and N-cadherins. Originally believed to be a stable component of E-cadherin/catenin adhesion complexes and to mediate the linkage of cadherins to the actin cytoskeleton at adherens junctions. In contrast, cortical actin was found to be much more dynamic than E-cadherin/catenin complexes and CTNNA1 was shown not to bind to F-actin when assembled in the complex suggesting a different linkage between actin and adherens junctions components. The homodimeric form may regulate actin filament assembly and inhibit actin branching by competing with the Arp2/3 complex for binding to actin filaments. Involved in the regulation of WWTR1/TAZ, YAP1 and TGFB1-dependent SMAD2 and SMAD3 nuclear accumulation. May play a crucial role in cell differentiation. The chain is Catenin alpha-1 from Bos taurus (Bovine).